We begin with the raw amino-acid sequence, 362 residues long: Mannan endo-1,4-beta-mannosidase (362 aa).

The first 26 residues, 1-26, serve as a signal peptide directing secretion; the sequence is MFKKHTISLLIIFLLASAVLAKPIEA. Residues 38 to 349 enclose the GH26 domain; sequence QTTKTVMNWL…YHDSWTLNKG (312 aa). Residue H131 participates in substrate binding. Catalysis depends on E193, which acts as the Proton donor. W198 and Y268 together coordinate substrate. E292 serves as the catalytic Nucleophile. A substrate-binding site is contributed by 324–325; that stretch reads WN.

Belongs to the glycosyl hydrolase 26 family. In terms of assembly, homodimer.

The protein resides in the secreted. The catalysed reaction is Random hydrolysis of (1-&gt;4)-beta-D-mannosidic linkages in mannans, galactomannans and glucomannans.. Its function is as follows. Involved in the degradation of glucomannan. Catalyzes the endo hydrolysis of beta-1,4-linked mannan, galactomannan and glucomannan. This Bacillus subtilis (strain 168) protein is Mannan endo-1,4-beta-mannosidase.